Reading from the N-terminus, the 696-residue chain is MARLVAVCRDGEEEFPFERRQIPLYIDDTLTMVMEFPDNVLNLDGHQNNGAQLKQFIQRHSMLKQQDLSIAMVVTSREVLSALSQLVPCVGCRRSVERLFSQLVESGNPALEPLTVGPKGVLSLTRSCMTDAKKLYTLFYVHGSKLNDMIDAIPKSKKNKRCQLHSLDTHKPKPLGGCWMDVWELMSQECRDEVVLIDSSCLLETLETYLRKHRFCTDCKNKVLRAYNILIGELDCSKEKGYCAALYEGLRCCPHERHIHVCCETDFIAHLLGRAEPEFAGGRRERHAKTIDIAQEEVLTCLGIHLYERLHRIWQKLRAEEQTWQMLFYLGVDALRKSFEMTVEKVQGISRLEQLCEEFSEEERVRELKQEKKRQKRKNRRKNKCVCDSPASLHTADEKAVSQEKETDFMENSCKACGSTEDGNTCVEVIVTNENTSCTCPSSGNLLGSPKIKKGMSPHCNGSDCGYSSSMEGSETGSREGSDVACTEGICNHDEHGEDPCVHHCEDKEDDGDSCVECWANSEENNTKGKNKKKKKKSKMLKCDEHIQKLGSCITDPGNRETSGNTMHTVFHRDKTKDAHPESCCSTEKGGQPLPWFEHRKNVPQFTEPTEMSFGPDSGKGAKSLVELLDESECTSDEEIFISQDEIQSFMANNQSFYSNREQYRQHLKEKFNKYCRLNDHKRPVCSGWLTTAGAN.

Ser-360 carries the post-translational modification Phosphoserine.

As to quaternary structure, interacts with GGN.

The protein localises to the cytoplasmic vesicle. In terms of biological role, may be involved in spermatogenesis. This is Gametogenetin-binding protein 2 (Ggnbp2) from Rattus norvegicus (Rat).